Reading from the N-terminus, the 745-residue chain is Phosphoribosylformylglycinamidine synthase subunit PurL (745 aa).

Histidine 47 is a catalytic residue. Tyrosine 50 and lysine 90 together coordinate ATP. Residue glutamate 92 participates in Mg(2+) binding. Substrate is bound by residues 93-96 (SHNH) and arginine 115. Residue histidine 94 is the Proton acceptor of the active site. Aspartate 116 contacts Mg(2+). Position 240 (glutamine 240) interacts with substrate. Aspartate 268 provides a ligand contact to Mg(2+). 312 to 314 (ESQ) provides a ligand contact to substrate. ATP is bound by residues asparagine 501 and glycine 538. Asparagine 539 contributes to the Mg(2+) binding site. Serine 541 is a binding site for substrate.

The protein belongs to the FGAMS family. In terms of assembly, monomer. Part of the FGAM synthase complex composed of 1 PurL, 1 PurQ and 2 PurS subunits.

The protein localises to the cytoplasm. It catalyses the reaction N(2)-formyl-N(1)-(5-phospho-beta-D-ribosyl)glycinamide + L-glutamine + ATP + H2O = 2-formamido-N(1)-(5-O-phospho-beta-D-ribosyl)acetamidine + L-glutamate + ADP + phosphate + H(+). The protein operates within purine metabolism; IMP biosynthesis via de novo pathway; 5-amino-1-(5-phospho-D-ribosyl)imidazole from N(2)-formyl-N(1)-(5-phospho-D-ribosyl)glycinamide: step 1/2. Functionally, part of the phosphoribosylformylglycinamidine synthase complex involved in the purines biosynthetic pathway. Catalyzes the ATP-dependent conversion of formylglycinamide ribonucleotide (FGAR) and glutamine to yield formylglycinamidine ribonucleotide (FGAM) and glutamate. The FGAM synthase complex is composed of three subunits. PurQ produces an ammonia molecule by converting glutamine to glutamate. PurL transfers the ammonia molecule to FGAR to form FGAM in an ATP-dependent manner. PurS interacts with PurQ and PurL and is thought to assist in the transfer of the ammonia molecule from PurQ to PurL. The protein is Phosphoribosylformylglycinamidine synthase subunit PurL of Leptospira borgpetersenii serovar Hardjo-bovis (strain JB197).